We begin with the raw amino-acid sequence, 436 residues long: 3-ketoacyl-CoA thiolase (436 aa).

The Acyl-thioester intermediate role is filled by Cys-99. Catalysis depends on proton acceptor residues His-392 and Cys-422.

The protein belongs to the thiolase-like superfamily. Thiolase family. Heterotetramer of two alpha chains (FadJ) and two beta chains (FadI).

Its subcellular location is the cytoplasm. The catalysed reaction is an acyl-CoA + acetyl-CoA = a 3-oxoacyl-CoA + CoA. It functions in the pathway lipid metabolism; fatty acid beta-oxidation. Catalyzes the final step of fatty acid oxidation in which acetyl-CoA is released and the CoA ester of a fatty acid two carbons shorter is formed. This chain is 3-ketoacyl-CoA thiolase, found in Shewanella pealeana (strain ATCC 700345 / ANG-SQ1).